Here is a 664-residue protein sequence, read N- to C-terminus: DCC-interacting protein 13-beta (664 aa).

Residues 1-428 (MPAVDKLLLE…NSEMENENDK (428 aa)) are required for RAB5A binding. In terms of domain architecture, BAR spans 3–268 (AVDKLLLEEA…ESVYTPDSDV (266 aa)). The PH domain occupies 277-375 (LIQKAGYLNL…WICAINNISR (99 aa)). The PID domain occupies 488 to 637 (SLLQQMFIVR…LMLSIPLTND (150 aa)). The tract at residues 643-664 (LNDQPDDDDGNPNEHRGAESEA) is disordered. Basic and acidic residues predominate over residues 654 to 664 (PNEHRGAESEA).

In terms of assembly, homodimer. Homotetramer. Binds RAB5A/Rab5 through an N-terminal domain. This interaction is essential for its recruitment to endosomal membranes as well as its role in cell proliferation. Binds subunits of the NuRD/MeCP1 complex. Interacts with FSHR; interaction is independent of follicle stimulating hormone stimulation. Interacts with APPL1; the interaction is decreased by adiponectin in a time-dependent manner. Forms a complex comprising APPL1, RUVBL2, CTNNB1, HDAC1 and HDAC2; interaction reduces interaction between CTNNB1, HDAC1, HDAC2 and RUVBL2 leading to the decrease of deacetylase activity of this complex; affects the recruitment of repressive complexes to the Wnt target genes. Interacts (via BAR domain) with TBC1D1; interaction is dependent of TBC1D1 phosphorylation at 'Ser-235'; interaction diminishes the phosphorylation of TBC1D1 at 'Thr-596', resulting in inhibition of SLC2A4 translocation and glucose uptake. Interacts with ANXA2; targets APPL2 to endosomes and acting in parallel to RAB5A. Interacts with RAB31 (in GTP-bound form); interaction contributes to or enhances recruitment of APPL2 to the phagosomes; interaction enhances Fc-gamma receptor-mediated phagocytosis through PI3K/Akt signaling in macrophages. Interacts with PIK3R1; forms a complex with PIK3R1 and APPL1. Interacts (via BAR domain) with ADIPOR1; hinders the accessibility of APPL1 to ADIPOR1; negatively regulates adiponectin signaling; ADIPOQ dissociates this interaction and facilitates the recruitment of APPL1 to ADIPOR1. Interacts (via BAR domain) with ADIPOR2; ADIPOQ dissociates this interaction. As to expression, high levels in brain, heart, kidney and skeletal muscle.

The protein localises to the early endosome membrane. Its subcellular location is the nucleus. The protein resides in the cell membrane. It is found in the endosome membrane. It localises to the cytoplasm. The protein localises to the cytoplasmic vesicle. Its subcellular location is the phagosome. The protein resides in the cell projection. It is found in the ruffle. It localises to the ruffle membrane. The protein localises to the phagosome membrane. Functionally, multifunctional adapter protein that binds to various membrane receptors, nuclear factors and signaling proteins to regulate many processes, such as cell proliferation, immune response, endosomal trafficking and cell metabolism. Regulates signaling pathway leading to cell proliferation through interaction with RAB5A and subunits of the NuRD/MeCP1 complex. Plays a role in immune response by modulating phagocytosis, inflammatory and innate immune responses. In macrophages, enhances Fc-gamma receptor-mediated phagocytosis through interaction with RAB31 leading to activation of PI3K/Akt signaling. In response to LPS, modulates inflammatory responses by playing a key role on the regulation of TLR4 signaling and in the nuclear translocation of RELA/NF-kappa-B p65 and the secretion of pro- and anti-inflammatory cytokines. Also functions as a negative regulator of innate immune response via inhibition of AKT1 signaling pathway by forming a complex with APPL1 and PIK3R1. Plays a role in endosomal trafficking of TGFBR1 from the endosomes to the nucleus. Plays a role in cell metabolism by regulating adiponecting ans insulin signaling pathways and adaptative thermogenesis. In muscle, negatively regulates adiponectin-simulated glucose uptake and fatty acid oxidation by inhibiting adiponectin signaling pathway through APPL1 sequestration thereby antagonizing APPL1 action. In muscles, negatively regulates insulin-induced plasma membrane recruitment of GLUT4 and glucose uptake through interaction with TBC1D1. Plays a role in cold and diet-induced adaptive thermogenesis by activating ventromedial hypothalamus (VMH) neurons throught AMPK inhibition which enhances sympathetic outflow to subcutaneous white adipose tissue (sWAT), sWAT beiging and cold tolerance. Also plays a role in other signaling pathways namely Wnt/beta-catenin, HGF and glucocorticoid receptor signaling. Positive regulator of beta-catenin/TCF-dependent transcription through direct interaction with RUVBL2/reptin resulting in the relief of RUVBL2-mediated repression of beta-catenin/TCF target genes by modulating the interactions within the beta-catenin-reptin-HDAC complex. May affect adult neurogenesis in hippocampus and olfactory system via regulating the sensitivity of glucocorticoid receptor. Required for fibroblast migration through HGF cell signaling. The protein is DCC-interacting protein 13-beta of Homo sapiens (Human).